The following is a 778-amino-acid chain: Endonuclease MutS2 (778 aa).

328-335 lines the ATP pocket; the sequence is GPNTGGKT. The 76-residue stretch at 702 to 777 folds into the Smr domain; that stretch reads LDLRGKRYEE…GSGATIVTFK (76 aa).

It belongs to the DNA mismatch repair MutS family. MutS2 subfamily. Homodimer. Binds to stalled ribosomes, contacting rRNA.

Endonuclease that is involved in the suppression of homologous recombination and thus may have a key role in the control of bacterial genetic diversity. In terms of biological role, acts as a ribosome collision sensor, splitting the ribosome into its 2 subunits. Detects stalled/collided 70S ribosomes which it binds and splits by an ATP-hydrolysis driven conformational change. Acts upstream of the ribosome quality control system (RQC), a ribosome-associated complex that mediates the extraction of incompletely synthesized nascent chains from stalled ribosomes and their subsequent degradation. Probably generates substrates for RQC. In Streptococcus pneumoniae serotype 19F (strain G54), this protein is Endonuclease MutS2.